The following is a 257-amino-acid chain: Phosphatidylglycerol--prolipoprotein diacylglyceryl transferase (257 aa).

The next 4 membrane-spanning stretches (helical) occupy residues Phe12–Ala32, Phe49–Glu69, Ile83–Ile103, and Leu109–Ile129. Arg131 contacts a 1,2-diacyl-sn-glycero-3-phospho-(1'-sn-glycerol). 3 helical membrane-spanning segments follow: residues Val167–Ile187, Gly197–Met217, and Gly226–Ile246.

This sequence belongs to the Lgt family.

The protein localises to the cell membrane. The enzyme catalyses L-cysteinyl-[prolipoprotein] + a 1,2-diacyl-sn-glycero-3-phospho-(1'-sn-glycerol) = an S-1,2-diacyl-sn-glyceryl-L-cysteinyl-[prolipoprotein] + sn-glycerol 1-phosphate + H(+). The protein operates within protein modification; lipoprotein biosynthesis (diacylglyceryl transfer). In terms of biological role, catalyzes the transfer of the diacylglyceryl group from phosphatidylglycerol to the sulfhydryl group of the N-terminal cysteine of a prolipoprotein, the first step in the formation of mature lipoproteins. The chain is Phosphatidylglycerol--prolipoprotein diacylglyceryl transferase from Streptococcus agalactiae serotype Ia (strain ATCC 27591 / A909 / CDC SS700).